The chain runs to 81 residues: ATP synthase subunit c (81 aa).

The next 2 membrane-spanning stretches (helical) occupy residues Ala-7 to Gly-27 and Leu-57 to Ala-77.

It belongs to the ATPase C chain family. F-type ATPases have 2 components, F(1) - the catalytic core - and F(0) - the membrane proton channel. F(1) has five subunits: alpha(3), beta(3), gamma(1), delta(1), epsilon(1). F(0) has four main subunits: a(1), b(1), b'(1) and c(10-14). The alpha and beta chains form an alternating ring which encloses part of the gamma chain. F(1) is attached to F(0) by a central stalk formed by the gamma and epsilon chains, while a peripheral stalk is formed by the delta, b and b' chains.

The protein localises to the cellular thylakoid membrane. F(1)F(0) ATP synthase produces ATP from ADP in the presence of a proton or sodium gradient. F-type ATPases consist of two structural domains, F(1) containing the extramembraneous catalytic core and F(0) containing the membrane proton channel, linked together by a central stalk and a peripheral stalk. During catalysis, ATP synthesis in the catalytic domain of F(1) is coupled via a rotary mechanism of the central stalk subunits to proton translocation. In terms of biological role, key component of the F(0) channel; it plays a direct role in translocation across the membrane. A homomeric c-ring of between 10-14 subunits forms the central stalk rotor element with the F(1) delta and epsilon subunits. This is ATP synthase subunit c from Synechococcus elongatus (strain ATCC 33912 / PCC 7942 / FACHB-805) (Anacystis nidulans R2).